Here is a 463-residue protein sequence, read N- to C-terminus: UDP-N-acetylmuramoylalanine--D-glutamate ligase (463 aa).

Residue G121–T127 participates in ATP binding.

This sequence belongs to the MurCDEF family.

It localises to the cytoplasm. The catalysed reaction is UDP-N-acetyl-alpha-D-muramoyl-L-alanine + D-glutamate + ATP = UDP-N-acetyl-alpha-D-muramoyl-L-alanyl-D-glutamate + ADP + phosphate + H(+). It participates in cell wall biogenesis; peptidoglycan biosynthesis. Functionally, cell wall formation. Catalyzes the addition of glutamate to the nucleotide precursor UDP-N-acetylmuramoyl-L-alanine (UMA). The polypeptide is UDP-N-acetylmuramoylalanine--D-glutamate ligase (murD) (Rhizobium meliloti (strain 1021) (Ensifer meliloti)).